Here is a 130-residue protein sequence, read N- to C-terminus: Small ribosomal subunit protein uS11 (130 aa).

It belongs to the universal ribosomal protein uS11 family. As to quaternary structure, part of the 30S ribosomal subunit. Interacts with proteins S7 and S18. Binds to IF-3.

Located on the platform of the 30S subunit, it bridges several disparate RNA helices of the 16S rRNA. Forms part of the Shine-Dalgarno cleft in the 70S ribosome. This Xylella fastidiosa (strain M23) protein is Small ribosomal subunit protein uS11.